The chain runs to 312 residues: GTP cyclohydrolase MptA (312 aa).

The protein belongs to the GTP cyclohydrolase IV family. In terms of assembly, homodimer. Fe(2+) serves as cofactor.

It carries out the reaction GTP + H2O = 7,8-dihydroneopterin 2',3'-cyclic phosphate + formate + diphosphate + H(+). The protein operates within cofactor biosynthesis; 5,6,7,8-tetrahydromethanopterin biosynthesis. Converts GTP to 7,8-dihydro-D-neopterin 2',3'-cyclic phosphate, the first intermediate in the biosynthesis of coenzyme methanopterin. The protein is GTP cyclohydrolase MptA of Methanococcus vannielii (strain ATCC 35089 / DSM 1224 / JCM 13029 / OCM 148 / SB).